We begin with the raw amino-acid sequence, 136 residues long: Large ribosomal subunit protein bL21 (136 aa).

Residues 107-136 (RAAADRKTAPKRASAKAAADQTTAAQATAE) form a disordered region. Over residues 121–136 (AKAAADQTTAAQATAE) the composition is skewed to low complexity.

It belongs to the bacterial ribosomal protein bL21 family. As to quaternary structure, part of the 50S ribosomal subunit. Contacts protein L20.

This protein binds to 23S rRNA in the presence of protein L20. The sequence is that of Large ribosomal subunit protein bL21 from Acidothermus cellulolyticus (strain ATCC 43068 / DSM 8971 / 11B).